A 272-amino-acid polypeptide reads, in one-letter code: Aquaporin-11 (272 aa).

The Cytoplasmic segment spans residues 1–14 (MTALRALWSEMQDT). Residues 15–35 (CTSLGLMLSVVLLAGLARVVA) form a helical membrane-spanning segment. Over 36 to 47 (RQQQLHRPMAHA) the chain is Lumenal. A helical membrane pass occupies residues 48–68 (FVLEFLATLQLCCCTHELLLL). Residues 69 to 75 (SEQEPAH) lie on the Cytoplasmic side of the membrane. Residues 76–96 (PTWPLTLIYFFTLVHGLTLVG) form a helical membrane-spanning segment. At 97-167 (TSSNPCGVMM…NPIQVDLPKA (71 aa)) the chain is on the lumenal side. The NPC motif lies at 100 to 102 (NPC). The chain crosses the membrane as a helical span at residues 168–188 (VIVEALCSFIFHSALLNFQEV). Residues 189–195 (RPKLRIH) lie on the Cytoplasmic side of the membrane. Residues 196–216 (LLAALITFLVYAGGSLTGAVF) form a helical membrane-spanning segment. The NPA motif lies at 217–219 (NPA). At 217 to 235 (NPALALSLHFKCFDEAFLQ) the chain is on the lumenal side. Residues 236–256 (FFIVYWLAPSLGILLMILMFS) traverse the membrane as a helical segment. Over 257–272 (FFLPWLYNNHTINKKE) the chain is Cytoplasmic.

It belongs to the MIP/aquaporin (TC 1.A.8) family. AQP11/AQP12 subfamily. In terms of assembly, homodimer; disulfide-linked. Homotetramer. Can also form homomultimer. Post-translationally, not glycosylated. As to expression, expressed in retina specifically at retinal Mueller glial cells.

It is found in the endoplasmic reticulum membrane. Its subcellular location is the cytoplasmic vesicle membrane. The protein resides in the cell membrane. The enzyme catalyses H2O(in) = H2O(out). It carries out the reaction glycerol(in) = glycerol(out). It catalyses the reaction H2O2(out) = H2O2(in). In terms of biological role, channel protein that facilitates the transport of water, glycerol and hydrogen peroxide across membrane of cell or organelles guaranteeing intracellular homeostasis in several organes like liver, kidney and brain. In situation of stress, participates in endoplasmic reticulum (ER) homeostasis by regulating redox homeostasis through the transport of hydrogen peroxide across the endoplasmic reticulum membrane thereby regulating the oxidative stress through the NADPH oxidase 2 pathway. Plays a role by maintaining an environment suitable for translation or protein foldings in the ER lumen namely by participating in the PKD1 glycosylation processing resulting in regulation of PKD1 membrane trafficking thereby preventing the accumulation of unfolding protein in ER. Plays a role in the proximal tubule function by regulating its endosomal acidification. May play a role in postnatal kidney development. This chain is Aquaporin-11, found in Equus caballus (Horse).